The following is an 89-amino-acid chain: Small ribosomal subunit protein uS14B (89 aa).

The segment at 38 to 61 is disordered; sequence KLPKDAHPSRLKLRDQTDGRPRGY. A compositionally biased stretch (basic and acidic residues) spans 39-58; it reads LPKDAHPSRLKLRDQTDGRP.

The protein belongs to the universal ribosomal protein uS14 family. In terms of assembly, part of the 30S ribosomal subunit. Contacts proteins S3 and S10.

Functionally, binds 16S rRNA, required for the assembly of 30S particles and may also be responsible for determining the conformation of the 16S rRNA at the A site. The chain is Small ribosomal subunit protein uS14B from Enterococcus faecalis (strain ATCC 700802 / V583).